Reading from the N-terminus, the 505-residue chain is COMPASS component BRE2 (505 aa).

The B30.2/SPRY domain maps to 70 to 295 (SANPFFTILG…LKQETTNKEF (226 aa)). S227 carries the phosphoserine modification. The disordered stretch occupies residues 271 to 290 (EPWREDAENGPSRKKLKQET). K318 is a DNA binding site. A disordered region spans residues 398–420 (RDESNDKNTTSAKKKKQQQKKKK). The span at 409 to 420 (AKKKKQQQKKKK) shows a compositional bias: basic residues.

Belongs to the cclA family. Component of the Set1C/COMPASS complex which consists of SET1(2), BRE2(2), SPP1(2), SDC1(1), SHG1(1), SWD1(1), SWD2(1), and SWD3(1). Interacts directly with SDC1.

It is found in the nucleus. Its subcellular location is the chromosome. The protein resides in the telomere. In terms of biological role, component of the Set1C/COMPASS complex that specifically mono-, di- and trimethylates histone H3 to form H3K4me1/2/3, which subsequently plays a role in telomere length maintenance and transcription elongation regulation. COMPASS recognizes ubiquitinated H2B on one face of the nucleosome which stimulates the methylation of H3 on the opposing face. The chain is COMPASS component BRE2 from Saccharomyces cerevisiae (strain ATCC 204508 / S288c) (Baker's yeast).